The chain runs to 337 residues: Glycerol-3-phosphate dehydrogenase [NAD(P)+] 2 (337 aa).

The NADPH site is built by Thr-11, Trp-12, and Lys-105. The sn-glycerol 3-phosphate site is built by Lys-105, Gly-139, and Thr-141. Ala-143 contacts NADPH. Sn-glycerol 3-phosphate contacts are provided by Lys-194, Asp-247, Ser-257, Arg-258, and Asn-259. Lys-194 functions as the Proton acceptor in the catalytic mechanism. Arg-258 contributes to the NADPH binding site. Positions 282 and 284 each coordinate NADPH.

It belongs to the NAD-dependent glycerol-3-phosphate dehydrogenase family.

It is found in the cytoplasm. It catalyses the reaction sn-glycerol 3-phosphate + NAD(+) = dihydroxyacetone phosphate + NADH + H(+). It carries out the reaction sn-glycerol 3-phosphate + NADP(+) = dihydroxyacetone phosphate + NADPH + H(+). It participates in membrane lipid metabolism; glycerophospholipid metabolism. In terms of biological role, catalyzes the reduction of the glycolytic intermediate dihydroxyacetone phosphate (DHAP) to sn-glycerol 3-phosphate (G3P), the key precursor for phospholipid synthesis. In Lactobacillus delbrueckii subsp. bulgaricus (strain ATCC 11842 / DSM 20081 / BCRC 10696 / JCM 1002 / NBRC 13953 / NCIMB 11778 / NCTC 12712 / WDCM 00102 / Lb 14), this protein is Glycerol-3-phosphate dehydrogenase [NAD(P)+] 2.